A 240-amino-acid chain; its full sequence is PF03932 family protein CutC (240 aa).

It belongs to the CutC family.

Its subcellular location is the cytoplasm. This chain is PF03932 family protein CutC, found in Xanthomonas campestris pv. campestris (strain 8004).